Here is a 79-residue protein sequence, read N- to C-terminus: uncharacterized protein (79 aa).

This is an uncharacterized protein from Escherichia coli O6:H1 (strain CFT073 / ATCC 700928 / UPEC).